The chain runs to 234 residues: Carboxy-S-adenosyl-L-methionine synthase (234 aa).

Residues Tyr-35, 60–62, 109–110, Asn-124, and Arg-191 contribute to the S-adenosyl-L-methionine site; these read GCS and DV.

The protein belongs to the class I-like SAM-binding methyltransferase superfamily. Cx-SAM synthase family. In terms of assembly, homodimer.

The catalysed reaction is prephenate + S-adenosyl-L-methionine = carboxy-S-adenosyl-L-methionine + 3-phenylpyruvate + H2O. In terms of biological role, catalyzes the conversion of S-adenosyl-L-methionine (SAM) to carboxy-S-adenosyl-L-methionine (Cx-SAM). The sequence is that of Carboxy-S-adenosyl-L-methionine synthase from Campylobacter curvus (strain 525.92).